Reading from the N-terminus, the 220-residue chain is UPF0319 protein YccT (220 aa).

An N-terminal signal peptide occupies residues 1–20; that stretch reads MKTGALATFLALCLPVTVFA.

This sequence belongs to the UPF0319 family.

The protein is UPF0319 protein YccT of Salmonella enteritidis PT4 (strain P125109).